The following is a 341-amino-acid chain: S-adenosylmethionine:tRNA ribosyltransferase-isomerase (341 aa).

Belongs to the QueA family. Monomer.

It is found in the cytoplasm. It catalyses the reaction 7-aminomethyl-7-carbaguanosine(34) in tRNA + S-adenosyl-L-methionine = epoxyqueuosine(34) in tRNA + adenine + L-methionine + 2 H(+). Its pathway is tRNA modification; tRNA-queuosine biosynthesis. In terms of biological role, transfers and isomerizes the ribose moiety from AdoMet to the 7-aminomethyl group of 7-deazaguanine (preQ1-tRNA) to give epoxyqueuosine (oQ-tRNA). The polypeptide is S-adenosylmethionine:tRNA ribosyltransferase-isomerase (Staphylococcus saprophyticus subsp. saprophyticus (strain ATCC 15305 / DSM 20229 / NCIMB 8711 / NCTC 7292 / S-41)).